We begin with the raw amino-acid sequence, 68 residues long: MAQMKIEDIRAMSPDQQDDAILNLKKERFNLRFQRATGQLENTSRLREARRDIARIKTVAAQTRAKKK.

Belongs to the universal ribosomal protein uL29 family.

In Bradyrhizobium diazoefficiens (strain JCM 10833 / BCRC 13528 / IAM 13628 / NBRC 14792 / USDA 110), this protein is Large ribosomal subunit protein uL29.